We begin with the raw amino-acid sequence, 508 residues long: NADH-quinone oxidoreductase subunit N 1 (508 aa).

13 helical membrane-spanning segments follow: residues 2-22, 47-67, 87-107, 126-146, 175-195, 220-240, 260-280, 291-311, 321-341, 351-371, 396-416, 431-453, and 479-499; these read ILGP…GALL, ALGT…VGFV, FTLF…LLAG, FSTV…LFLG, FLLG…IYGA, ALLL…VSAV, FMAV…LLGA, AGWP…ANLI, MLAY…AATV, VMFY…TLIL, ALAF…AGFF, YTLS…RVLV, and LVVS…SLGI.

It belongs to the complex I subunit 2 family. As to quaternary structure, NDH-1 is composed of 14 different subunits. Subunits NuoA, H, J, K, L, M, N constitute the membrane sector of the complex.

Its subcellular location is the cell inner membrane. The catalysed reaction is a quinone + NADH + 5 H(+)(in) = a quinol + NAD(+) + 4 H(+)(out). In terms of biological role, NDH-1 shuttles electrons from NADH, via FMN and iron-sulfur (Fe-S) centers, to quinones in the respiratory chain. The immediate electron acceptor for the enzyme in this species is believed to be ubiquinone. Couples the redox reaction to proton translocation (for every two electrons transferred, four hydrogen ions are translocated across the cytoplasmic membrane), and thus conserves the redox energy in a proton gradient. The protein is NADH-quinone oxidoreductase subunit N 1 of Sorangium cellulosum (strain So ce56) (Polyangium cellulosum (strain So ce56)).